The following is a 729-amino-acid chain: Fibroblast growth factor receptor homolog 1 (729 aa).

Residues 1–36 form the signal peptide; it reads MAAAWSWRASHSTITMTSGSLVVLFLLLSIWQPAVQ. The Extracellular segment spans residues 37-309; that stretch reads VEGRRQMANS…VASGSLHSTS (273 aa). Residues 56 to 101 are disordered; that stretch reads ARSQNKTPAITNNANQSSTSSADLDDGAADDDDNKADLPVNVSSKP. The segment covering 66–77 has biased composition (low complexity); sequence TNNANQSSTSSA. Asn70 carries N-linked (GlcNAc...) asparagine glycosylation. The segment covering 78-89 has biased composition (acidic residues); sequence DLDDGAADDDDN. N-linked (GlcNAc...) asparagine glycans are attached at residues Asn96, Asn134, Asn140, Asn171, Asn207, Asn213, Asn242, Asn246, and Asn282. Ig-like C2-type domains are found at residues 106–192 and 203–279; these read PKKM…VIVS and TGPL…NSLG. A disulfide bridge links Cys125 with Cys174. Cys220 and Cys272 form a disulfide bridge. Residues 310 to 330 form a helical membrane-spanning segment; sequence FVYIFVFGGLIFIFMTTLFVF. The Cytoplasmic portion of the chain corresponds to 331 to 729; the sequence is YAIRKMKHEK…TDNLQKWCNY (399 aa). Residues 416 to 692 form the Protein kinase domain; it reads LVLGATLGEG…EIVEYMDKLL (277 aa). ATP contacts are provided by residues 422 to 430 and Lys443; that span reads LGEGAFGRV. The active-site Proton acceptor is Asp556. Tyr587 is modified (phosphotyrosine; by autocatalysis).

The protein belongs to the protein kinase superfamily. Tyr protein kinase family. Fibroblast growth factor receptor subfamily. In terms of tissue distribution, in early embryos, expression is specific to mesodermal primordium and invaginated mesodermal cells. At later stages, expression is seen in putative muscle precursor cells and in the CNS.

Its subcellular location is the membrane. The catalysed reaction is L-tyrosyl-[protein] + ATP = O-phospho-L-tyrosyl-[protein] + ADP + H(+). Its function is as follows. May be required for patterning of muscle precursor cells. May be essential for generation of mesodermal and endodermal layers, invaginations of various types of cells and CNS formation. The protein is Fibroblast growth factor receptor homolog 1 (htl) of Drosophila melanogaster (Fruit fly).